The sequence spans 344 residues: Probable dual-specificity RNA methyltransferase RlmN (344 aa).

Glu92 functions as the Proton acceptor in the catalytic mechanism. Residues 98–325 form the Radical SAM core domain; sequence DEDRATLCVS…TTIRASRGED (228 aa). Cysteines 105 and 330 form a disulfide. Positions 112, 116, and 119 each coordinate [4Fe-4S] cluster. Residues 157-158, Ser189, 211-213, and His287 contribute to the S-adenosyl-L-methionine site; these read GE and SLH. Residue Cys330 is the S-methylcysteine intermediate of the active site.

The protein belongs to the radical SAM superfamily. RlmN family. Requires [4Fe-4S] cluster as cofactor.

The protein localises to the cytoplasm. It carries out the reaction adenosine(2503) in 23S rRNA + 2 reduced [2Fe-2S]-[ferredoxin] + 2 S-adenosyl-L-methionine = 2-methyladenosine(2503) in 23S rRNA + 5'-deoxyadenosine + L-methionine + 2 oxidized [2Fe-2S]-[ferredoxin] + S-adenosyl-L-homocysteine. It catalyses the reaction adenosine(37) in tRNA + 2 reduced [2Fe-2S]-[ferredoxin] + 2 S-adenosyl-L-methionine = 2-methyladenosine(37) in tRNA + 5'-deoxyadenosine + L-methionine + 2 oxidized [2Fe-2S]-[ferredoxin] + S-adenosyl-L-homocysteine. In terms of biological role, specifically methylates position 2 of adenine 2503 in 23S rRNA and position 2 of adenine 37 in tRNAs. The protein is Probable dual-specificity RNA methyltransferase RlmN of Bacteroides fragilis (strain ATCC 25285 / DSM 2151 / CCUG 4856 / JCM 11019 / LMG 10263 / NCTC 9343 / Onslow / VPI 2553 / EN-2).